Here is a 449-residue protein sequence, read N- to C-terminus: Allantoinase (449 aa).

Positions 61, 63, 148, 184, 240, and 313 each coordinate Zn(2+). Position 148 is an N6-carboxylysine (lysine 148).

This sequence belongs to the metallo-dependent hydrolases superfamily. Allantoinase family. In terms of assembly, homotetramer. Zn(2+) serves as cofactor. Post-translationally, carboxylation allows a single lysine to coordinate two zinc ions.

It catalyses the reaction (S)-allantoin + H2O = allantoate + H(+). It functions in the pathway nitrogen metabolism; (S)-allantoin degradation; allantoate from (S)-allantoin: step 1/1. Its function is as follows. Catalyzes the conversion of allantoin (5-ureidohydantoin) to allantoic acid by hydrolytic cleavage of the five-member hydantoin ring. The chain is Allantoinase from Desulfitobacterium hafniense (strain DSM 10664 / DCB-2).